The sequence spans 511 residues: Apolipoprotein N-acyltransferase (511 aa).

6 helical membrane-spanning segments follow: residues 24–44 (LALAPFVYWPLAILSIALLYL), 58–78 (GWWYGFGAFGAGTSWIYVSIH), 90–110 (FLMLGFTAGVAFFFALPAWLW), 125–145 (LAFAALWLALELFRSWFLTGF), 163–183 (VPVGGVWLSSFVIALSAALLV), and 192–212 (GASLLLGLVLLLGPWAAGLYL). Positions 230 to 470 (IQGNIAQELK…QGILRGEVIP (241 aa)) constitute a CN hydrolase domain. Catalysis depends on glutamate 269, which acts as the Proton acceptor. Residue lysine 330 is part of the active site. Cysteine 382 acts as the Nucleophile in catalysis. A helical transmembrane segment spans residues 482 to 502 (VWPLAGLAGVLLLWALLGRQL).

The protein belongs to the CN hydrolase family. Apolipoprotein N-acyltransferase subfamily.

Its subcellular location is the cell inner membrane. The catalysed reaction is N-terminal S-1,2-diacyl-sn-glyceryl-L-cysteinyl-[lipoprotein] + a glycerophospholipid = N-acyl-S-1,2-diacyl-sn-glyceryl-L-cysteinyl-[lipoprotein] + a 2-acyl-sn-glycero-3-phospholipid + H(+). The protein operates within protein modification; lipoprotein biosynthesis (N-acyl transfer). Functionally, catalyzes the phospholipid dependent N-acylation of the N-terminal cysteine of apolipoprotein, the last step in lipoprotein maturation. This Pseudomonas aeruginosa (strain UCBPP-PA14) protein is Apolipoprotein N-acyltransferase.